Consider the following 1070-residue polypeptide: MKGKNRSLFVLLVLLLLHKVNNVLLERTIETLLECKNEYVKGENGYKLAKGHHCVEEDNLERWLQGTNERRSEENIKYKYGVTELKIKYAQMNGKRSSRILKESIYGAHNFGGNSYMEGKDGGDKTGEEKDGEHKTDSKTDNGKGANNLVMLDYETSSNGQPAGTLDNVLEFVTGHEGNSRKNSSNGGNPYDIDHKKTISSAIINHAFLQNTVMKNCNYKRKRRERDWDCNTKKDVCIPDRRYQLCMKELTNLVNNTDTNFHRDITFRKLYLKRKLIYDAAVEGDLLLKLNNYRYNKDFCKDIRWSLGDFGDIIMGTDMEGIGYSKVVENNLRSIFGTDEKAQQRRKQWWNESKAQIWTAMMYSVKKRLKGNFIWICKLNVAVNIEPQIYRWIREWGRDYVSELPTEVQKLKEKCDGKINYTDKKVCKVPPCQNACKSYDQWITRKKNQWDVLSNKFISVKNAEKVQTAGIVTPYDILKQELDEFNEVAFENEINKRDGAYIELCVCSVEEAKKNTQEVVTNVDNAAKSQATNSNPISQPVDSSKAEKVPGDSTHGNVNSGQDSSTTGKAVTGDGQNGNQTPAESDVQRSDIAESVSAKNVDPQKSVSKRSDDTASVTGIAEAGKENLGASNSRPSESTVEANSPGDDTVNSASIPVVSGENPLVTPYNGLRHSKDNSDSDGPAESMANPDSNSKGETGKGQDNDMAKATKDSSNSSDGTSSATGDTTDAVDREINKGVPEDRDKTVGSKDGGGEDNSANKDAATVVGEDRIRENSAGGSTNDRSKNDTEKNGASTPDSKQSEDATALSKTESLESTESGDRTTNDTTNSLENKNGGKEKDLQKHDFKSNDTPNEEPNSDQTTDAEGHDRDSIKNDKAERRKHMNKDTFTKNTNSHHLNSNNNLSNGKLDIKEYKYRDVKATREDIILMSSVRKCNNNISLEYCNSVEDKISSNTCSREKSKNLCCSISDFCLNYFDVYSYEYLSCMKKEFEDPSYKCFTKGGFKDKTYFAAAGALLILLLLIASRKMIKNDSEEATFNEFEEYCDNIHRIPLMPNNIEHMQPSTPLDYS.

The signal sequence occupies residues 1–20 (MKGKNRSLFVLLVLLLLHKV). At 21–1007 (NNVLLERTIE…CFTKGGFKDK (987 aa)) the chain is on the extracellular side. Residues 116–146 (YMEGKDGGDKTGEEKDGEHKTDSKTDNGKGA) are disordered. The span at 118-142 (EGKDGGDKTGEEKDGEHKTDSKTDN) shows a compositional bias: basic and acidic residues. A glycan (N-linked (GlcNAc...) asparagine) is linked at Asn-183. Residues 211-521 (NTVMKNCNYK…AKKNTQEVVT (311 aa)) form a pvRII region; mediates ACKR1 binding region. 2 disulfides stabilise this stretch: Cys-217–Cys-246 and Cys-230–Cys-237. Residues Asn-255, Asn-351, and Asn-420 are each glycosylated (N-linked (GlcNAc...) asparagine). Intrachain disulfides connect Cys-300–Cys-377, Cys-415–Cys-432, Cys-427–Cys-507, and Cys-436–Cys-505. 3 stretches are compositionally biased toward polar residues: residues 525-542 (NAAK…QPVD), 554-569 (THGN…TTGK), and 629-642 (GASN…TVEA). Residues 525 to 906 (NAAKSQATNS…HLNSNNNLSN (382 aa)) form a disordered region. Residues 697-711 (ETGKGQDNDMAKATK) show a composition bias toward basic and acidic residues. Low complexity predominate over residues 712–728 (DSSNSSDGTSSATGDTT). Asn-715 carries an N-linked (GlcNAc...) asparagine glycan. The segment covering 730-748 (AVDREINKGVPEDRDKTVG) has biased composition (basic and acidic residues). N-linked (GlcNAc...) asparagine glycosylation is present at Asn-787. Residues 808–817 (LSKTESLEST) show a composition bias toward low complexity. N-linked (GlcNAc...) asparagine glycosylation is present at Asn-825. Composition is skewed to basic and acidic residues over residues 835 to 849 (NGGK…DFKS) and 865 to 889 (AEGH…KDTF). Residues 895–906 (SHHLNSNNNLSN) show a composition bias toward low complexity. 2 N-linked (GlcNAc...) asparagine glycosylation sites follow: Asn-903 and Asn-938. Residues 1008-1025 (TYFAAAGALLILLLLIAS) form a helical membrane-spanning segment. The Cytoplasmic segment spans residues 1026 to 1070 (RKMIKNDSEEATFNEFEEYCDNIHRIPLMPNNIEHMQPSTPLDYS).

As to quaternary structure, homodimer; dimerization (via PvRII region) is promoted by the interaction with human ACKR1. Interacts (via PvRII region) with human ACKR1 (via N-terminal extracellular domain).

The protein resides in the membrane. Functionally, binds to the human erythrocyte Duffy blood group determinant (ACKR1). The sequence is that of Duffy receptor (PVDR) from Plasmodium vivax (strain Salvador I).